The chain runs to 759 residues: Tripartite motif-containing protein 46 (759 aa).

Residues 1-166 form a required for proximal axon localization, axon formation and migration region; it reads MAEGEDMQTF…VERYRQSVSV (166 aa). Residues 33–59 form an RING-type 1; degenerate zinc finger; sequence CPVCQEMYKQPLVLPCTHNVCQACARE. Residues 67–98 form a disordered region; it reads IGHGGDPSSEPTSPASTPSTRSPRLSRRTLPK. Residues 73–89 are compositionally biased toward low complexity; sequence PSSEPTSPASTPSTRSP. The RING-type 2; degenerate zinc finger occupies 172-231; that stretch reads CQLCKPPPLEATKGCTECRATFCNECFKLFHPWGTQKAQHEPTLPTLSFRPKGLMCPDHK. The segment at 222-263 adopts a B box-type zinc-finger fold; sequence PKGLMCPDHKEEVTHYCKTCQRLVCQLCRVRRTHSGHKITPV. Zn(2+)-binding residues include cysteine 227, histidine 230, cysteine 249, and histidine 255. Residues 322-400 adopt a coiled-coil conformation; it reads AVLEEKRASL…RATEALQTFR (79 aa). Serine 330 carries the post-translational modification Phosphoserine. Positions 370–427 constitute a COS domain; sequence LKETDQPCFVQAAKQLHNRIARATEALQTFRPAASSSFRHCQLDVGREMKLLTELSFL. The required for microtubule association, proximal axon localization and axon formation stretch occupies residues 411–429; the sequence is QLDVGREMKLLTELSFLRV. In terms of domain architecture, Fibronectin type-III spans 429–528; the sequence is VPEAPVIDTQ…EDVHLHTPPA (100 aa). A B30.2/SPRY domain is found at 526–747; that stretch reads PPAPVLHFFL…LQEPVGTKPE (222 aa). Residue serine 627 is modified to Phosphoserine.

This sequence belongs to the TRIM/RBCC family. Interacts with TUBB3 and TUBA4A. As to expression, expressed in the central nervous system, including pyramidal neurons and interneurons in the cortex and hippocampus and all neuronal cell types in the cerebral and cerebellar cortex, and in the peripheral nervous system, including the dorsal root ganglion neurons.

It localises to the cell projection. The protein resides in the axon. The protein localises to the cytoplasm. Its subcellular location is the cytoskeleton. In terms of biological role, microtubule-associated protein that is involved in the formation of parallel microtubule bundles linked by cross-bridges in the proximal axon. Required for the uniform orientation and maintenance of the parallel microtubule fascicles, which are important for efficient cargo delivery and trafficking in axons. Thereby also required for proper axon formation, the establishment of neuronal polarity and proper neuronal migration. In Mus musculus (Mouse), this protein is Tripartite motif-containing protein 46 (Trim46).